Consider the following 279-residue polypeptide: Probable endonuclease 4 (279 aa).

Residues H69, H109, E145, D179, H182, H216, D229, H231, and E261 each coordinate Zn(2+).

The protein belongs to the AP endonuclease 2 family. Zn(2+) serves as cofactor.

It carries out the reaction Endonucleolytic cleavage to 5'-phosphooligonucleotide end-products.. Endonuclease IV plays a role in DNA repair. It cleaves phosphodiester bonds at apurinic or apyrimidinic (AP) sites, generating a 3'-hydroxyl group and a 5'-terminal sugar phosphate. This Chlorobium luteolum (strain DSM 273 / BCRC 81028 / 2530) (Pelodictyon luteolum) protein is Probable endonuclease 4.